The primary structure comprises 67 residues: DNA-directed RNA polymerase subunit omega (67 aa).

The protein belongs to the RNA polymerase subunit omega family. As to quaternary structure, the RNAP catalytic core consists of 2 alpha, 1 beta, 1 beta' and 1 omega subunit. When a sigma factor is associated with the core the holoenzyme is formed, which can initiate transcription.

The enzyme catalyses RNA(n) + a ribonucleoside 5'-triphosphate = RNA(n+1) + diphosphate. In terms of biological role, promotes RNA polymerase assembly. Latches the N- and C-terminal regions of the beta' subunit thereby facilitating its interaction with the beta and alpha subunits. This is DNA-directed RNA polymerase subunit omega from Bordetella petrii (strain ATCC BAA-461 / DSM 12804 / CCUG 43448).